A 365-amino-acid chain; its full sequence is Outer membrane protein assembly factor BamC (365 aa).

An N-terminal signal peptide occupies residues 1 to 19 (MKHNRLAIAALAPVLILVG). C20 carries N-palmitoyl cysteine lipidation. C20 is lipidated: S-diacylglycerol cysteine.

This sequence belongs to the BamC family. As to quaternary structure, part of the Bam complex.

The protein resides in the cell outer membrane. Its function is as follows. Part of the outer membrane protein assembly complex, which is involved in assembly and insertion of beta-barrel proteins into the outer membrane. This Ferrimonas balearica (strain DSM 9799 / CCM 4581 / KCTC 23876 / PAT) protein is Outer membrane protein assembly factor BamC.